The following is a 156-amino-acid chain: Small ribosomal subunit protein uS7 (156 aa).

Belongs to the universal ribosomal protein uS7 family. In terms of assembly, part of the 30S ribosomal subunit. Contacts proteins S9 and S11.

Its function is as follows. One of the primary rRNA binding proteins, it binds directly to 16S rRNA where it nucleates assembly of the head domain of the 30S subunit. Is located at the subunit interface close to the decoding center, probably blocks exit of the E-site tRNA. The protein is Small ribosomal subunit protein uS7 of Neisseria gonorrhoeae (strain ATCC 700825 / FA 1090).